A 550-amino-acid polypeptide reads, in one-letter code: Beta-cubebene synthase (550 aa).

Mg(2+) contacts are provided by D303, D307, D447, and E455. The DDXXD motif signature appears at D303–D307.

The protein belongs to the terpene synthase family. Tpsa subfamily. The cofactor is Mg(2+). As to expression, expressed in young developing leaves and in stamens. Not detected in tepals and carpels.

The catalysed reaction is (2E,6E)-farnesyl diphosphate = beta-cubebene + diphosphate. It functions in the pathway secondary metabolite biosynthesis; terpenoid biosynthesis. Sesquiterpene synthase converting farnesyl diphosphate into beta-cubebene (24.5%), alpha-muurolene (19.3%), delta-cadinol (18.6%), delta-elemene (16.0%), tau-muurolene (10.8%), and beta-elemene (10.8%). No activity with geranyl diphosphate or geranylgeranyl diphosphate. The polypeptide is Beta-cubebene synthase (Magnolia grandiflora (Southern magnolia)).